The following is a 431-amino-acid chain: Glutamate-1-semialdehyde 2,1-aminomutase (431 aa).

Lys-269 carries the post-translational modification N6-(pyridoxal phosphate)lysine.

It belongs to the class-III pyridoxal-phosphate-dependent aminotransferase family. HemL subfamily. Homodimer. The cofactor is pyridoxal 5'-phosphate.

The protein resides in the cytoplasm. The enzyme catalyses (S)-4-amino-5-oxopentanoate = 5-aminolevulinate. The protein operates within porphyrin-containing compound metabolism; protoporphyrin-IX biosynthesis; 5-aminolevulinate from L-glutamyl-tRNA(Glu): step 2/2. In Francisella tularensis subsp. holarctica (strain FTNF002-00 / FTA), this protein is Glutamate-1-semialdehyde 2,1-aminomutase.